The sequence spans 137 residues: Large ribosomal subunit protein uL16 (137 aa).

A compositionally biased stretch (basic residues) spans 1–16 (MLQPKRTKFRKVHTGR). The interval 1–22 (MLQPKRTKFRKVHTGRNRGLAQ) is disordered.

This sequence belongs to the universal ribosomal protein uL16 family. In terms of assembly, part of the 50S ribosomal subunit.

In terms of biological role, binds 23S rRNA and is also seen to make contacts with the A and possibly P site tRNAs. The chain is Large ribosomal subunit protein uL16 from Idiomarina loihiensis (strain ATCC BAA-735 / DSM 15497 / L2-TR).